Reading from the N-terminus, the 250-residue chain is Small ribosomal subunit protein uS3 (250 aa).

The KH type-2 domain occupies 39–111 (IRTLIKNHYP…KVQINIFEVK (73 aa)).

The protein belongs to the universal ribosomal protein uS3 family. Part of the 30S ribosomal subunit. Forms a tight complex with proteins S10 and S14.

Functionally, binds the lower part of the 30S subunit head. Binds mRNA in the 70S ribosome, positioning it for translation. The polypeptide is Small ribosomal subunit protein uS3 (Rubus stunt phytoplasma).